A 186-amino-acid chain; its full sequence is Elongation factor P (186 aa).

R32 is a glycosylation site (N-alpha-linked (Rha) arginine).

It belongs to the elongation factor P family. Post-translationally, glycosylated ar Arg-32 by EarP: arginine rhamnosylation is required for EF-P function and rescue of polyproline stalled ribosomes.

The protein localises to the cytoplasm. The protein operates within protein biosynthesis; polypeptide chain elongation. Functionally, involved in peptide bond synthesis. Stimulates efficient translation and peptide-bond synthesis on native or reconstituted 70S ribosomes in vitro. Probably functions indirectly by altering the affinity of the ribosome for aminoacyl-tRNA, thus increasing their reactivity as acceptors for peptidyl transferase. In Shewanella oneidensis (strain ATCC 700550 / JCM 31522 / CIP 106686 / LMG 19005 / NCIMB 14063 / MR-1), this protein is Elongation factor P.